The primary structure comprises 165 residues: Shikimate kinase (165 aa).

ATP is bound at residue 11–16; sequence GAGKTT. T15 contacts Mg(2+). The substrate site is built by D33, R57, and G78. R116 serves as a coordination point for ATP. R134 contributes to the substrate binding site.

This sequence belongs to the shikimate kinase family. In terms of assembly, monomer. Mg(2+) is required as a cofactor.

The protein resides in the cytoplasm. The catalysed reaction is shikimate + ATP = 3-phosphoshikimate + ADP + H(+). It functions in the pathway metabolic intermediate biosynthesis; chorismate biosynthesis; chorismate from D-erythrose 4-phosphate and phosphoenolpyruvate: step 5/7. Functionally, catalyzes the specific phosphorylation of the 3-hydroxyl group of shikimic acid using ATP as a cosubstrate. The protein is Shikimate kinase of Bacillus cereus (strain G9842).